Reading from the N-terminus, the 378-residue chain is 23S rRNA (uracil(747)-C(5))-methyltransferase RlmC (378 aa).

Residues C3, C11, C14, and C87 each contribute to the [4Fe-4S] cluster site. Positions 212, 241, 262, and 309 each coordinate S-adenosyl-L-methionine. C336 acts as the Nucleophile in catalysis.

This sequence belongs to the class I-like SAM-binding methyltransferase superfamily. RNA M5U methyltransferase family. RlmC subfamily.

The catalysed reaction is uridine(747) in 23S rRNA + S-adenosyl-L-methionine = 5-methyluridine(747) in 23S rRNA + S-adenosyl-L-homocysteine + H(+). Its function is as follows. Catalyzes the formation of 5-methyl-uridine at position 747 (m5U747) in 23S rRNA. This chain is 23S rRNA (uracil(747)-C(5))-methyltransferase RlmC, found in Shewanella halifaxensis (strain HAW-EB4).